A 584-amino-acid chain; its full sequence is Leucine-rich repeat and fibronectin type III domain-containing protein 1 (584 aa).

Residues 1-17 (MERLVFCVLVFGALAKA) form the signal peptide. An LRRNT domain is found at 18–51 (QLCPGRCICQTISPTLTLLCAKTGLLFVPPTVDR). Residues 18-494 (QLCPGRCICQ…VPSQFLGGTM (477 aa)) are Extracellular-facing. LRR repeat units lie at residues 52 to 73 (KTVE…DFLN), 76 to 97 (SLVH…AFMG), 100 to 121 (SLRA…QLKG), 124 to 145 (NLRH…SFDE), 149 to 170 (TIED…AIAR), 173 to 194 (NINT…TFTL), and 197 to 218 (KLVR…TLFQ). A glycan (N-linked (GlcNAc...) asparagine) is linked at Asn73. Residues 241 to 287 (NPLHCNCELLWLRRLTREDDLETCASPEHLMDKYFWSIQEEEFICEP) enclose the LRRCT domain. An Ig-like domain is found at 288 to 375 (PLITKHQVTK…GIATAAVHVH (88 aa)). Cysteines 310 and 359 form a disulfide. Asn332, Asn341, Asn384, Asn408, and Asn421 each carry an N-linked (GlcNAc...) asparagine glycan. Residues 393-414 (DPGLSDISTSSRSSSNDSKTHS) form a disordered region. The segment covering 397–409 (SDISTSSRSSSND) has biased composition (low complexity). The helical transmembrane segment at 495-515 (IIIIGGIIVASVLVFIIILMI) threads the bilayer. Residues 516-584 (RYKAYSGGGG…MVLPILHLLF (69 aa)) are Cytoplasmic-facing. Residues 539–564 (HVHSQTNGSRSAATKQSEEPPESPAG) are disordered. Residues 540-553 (VHSQTNGSRSAATK) show a composition bias toward polar residues.

It belongs to the LRFN family.

It is found in the membrane. Its subcellular location is the synapse. Involved in the regulation of excitatory synapses. This Danio rerio (Zebrafish) protein is Leucine-rich repeat and fibronectin type III domain-containing protein 1 (lrfn1).